Consider the following 194-residue polypeptide: Cyclin-dependent kinase inhibitor 4 (194 aa).

A compositionally biased stretch (basic and acidic residues) spans 49 to 58 (LELRSRRLEK). Disordered stretches follow at residues 49-70 (LELR…PRRR) and 107-139 (TRET…SHCK).

Belongs to the CDI family. ICK/KRP subfamily.

In Oryza sativa subsp. japonica (Rice), this protein is Cyclin-dependent kinase inhibitor 4 (KRP4).